The sequence spans 161 residues: MPSFDTVCEANFVEVKNAVENTAKEIGTRFDFKGTSAAVELKDKEITLFGDADFQLQQVEDILRNKLTKRNVDVRFLDVQKPQKIGGDKLKQVVKVKNGIDSEQAKKIQRLIKDSKLKLQAAIQEDKVRVTGAKRDDLQAAMALIRKDIADLPLTFDNFRD.

The protein belongs to the YajQ family.

Functionally, nucleotide-binding protein. The chain is Nucleotide-binding protein Dtpsy_2240 from Acidovorax ebreus (strain TPSY) (Diaphorobacter sp. (strain TPSY)).